A 625-amino-acid polypeptide reads, in one-letter code: Alpha-amylase 1 (625 aa).

Residues 1–22 (MGFSKIALFSLFALFGLPTSLA) form the signal peptide. An intrachain disulfide couples Cys-51 to Cys-59. Position 105 (Trp-105) interacts with substrate. Asn-143 serves as a coordination point for Ca(2+). N-linked (GlcNAc...) asparagine glycans are attached at residues Asn-153, Asn-163, and Asn-180. Cys-172 and Cys-187 form a disulfide bridge. Glu-185 and Asp-198 together coordinate Ca(2+). Residue Arg-227 participates in substrate binding. Ca(2+) is bound at residue Asp-229. Asp-229 acts as the Nucleophile in catalysis. 232–233 (KQ) contributes to the substrate binding site. Asn-241 carries N-linked (GlcNAc...) asparagine glycosylation. Residue Glu-253 coordinates Ca(2+). Glu-253 functions as the Proton donor in the catalytic mechanism. N-linked (GlcNAc...) asparagine glycans are attached at residues Asn-260 and Asn-286. Cys-263 and Cys-306 are joined by a disulfide. A substrate-binding site is contributed by Asp-322. Asn-331 is a glycosylation site (N-linked (GlcNAc...) asparagine). Arg-370 serves as a coordination point for substrate. N-linked (GlcNAc...) asparagine glycosylation is found at Asn-440 and Asn-461. Positions 526 to 579 (SATSSSKSSSSSSSRSGSSSSSSSRSGSTSSSGSSHTITSTSQSVHTSGSSTST) are disordered. Ser-603 carries the GPI-anchor amidated serine lipid modification. A propeptide spans 604-625 (SANAVRVSILGVAAFIAIVLFI) (removed in mature form).

This sequence belongs to the glycosyl hydrolase 13 family. The cofactor is Ca(2+).

It localises to the cell membrane. It carries out the reaction Endohydrolysis of (1-&gt;4)-alpha-D-glucosidic linkages in polysaccharides containing three or more (1-&gt;4)-alpha-linked D-glucose units.. The sequence is that of Alpha-amylase 1 (aah1) from Schizosaccharomyces pombe (strain 972 / ATCC 24843) (Fission yeast).